A 199-amino-acid polypeptide reads, in one-letter code: Peroxiredoxin-1 (199 aa).

Positions Ala6–Phe165 constitute a Thioredoxin domain. Cys52 serves as the catalytic Cysteine sulfenic acid (-SOH) intermediate.

This sequence belongs to the peroxiredoxin family. AhpC/Prx1 subfamily. In terms of assembly, homodimer; disulfide-linked, upon oxidation. 5 homodimers assemble to form a ring-like decamer. Interacts with GDPD5; forms a mixed-disulfide with GDPD5. Interacts with SESN1 and SESN2. The enzyme can be inactivated by further oxidation of the cysteine sulfenic acid (C(P)-SOH) to sulphinic acid (C(P)-SO2H) instead of its condensation to a disulfide bond. It can be reactivated by forming a transient disulfide bond with sulfiredoxin SRXN1, which reduces the cysteine sulfinic acid in an ATP- and Mg-dependent manner.

It is found in the cytoplasm. It catalyses the reaction a hydroperoxide + [thioredoxin]-dithiol = an alcohol + [thioredoxin]-disulfide + H2O. In terms of biological role, thiol-specific peroxidase that catalyzes the reduction of hydrogen peroxide and organic hydroperoxides to water and alcohols, respectively. Plays a role in cell protection against oxidative stress by detoxifying peroxides and as sensor of hydrogen peroxide-mediated signaling events. Might participate in the signaling cascades of growth factors and tumor necrosis factor-alpha by regulating the intracellular concentrations of H(2)O(2). Reduces an intramolecular disulfide bond in GDPD5 that gates the ability to GDPD5 to drive postmitotic motor neuron differentiation. In Gallus gallus (Chicken), this protein is Peroxiredoxin-1 (PRDX1).